We begin with the raw amino-acid sequence, 485 residues long: Glutamyl-tRNA(Gln) amidotransferase subunit A (485 aa).

Catalysis depends on charge relay system residues lysine 78 and serine 153. The active-site Acyl-ester intermediate is serine 177.

This sequence belongs to the amidase family. GatA subfamily. Heterotrimer of A, B and C subunits.

The enzyme catalyses L-glutamyl-tRNA(Gln) + L-glutamine + ATP + H2O = L-glutaminyl-tRNA(Gln) + L-glutamate + ADP + phosphate + H(+). In terms of biological role, allows the formation of correctly charged Gln-tRNA(Gln) through the transamidation of misacylated Glu-tRNA(Gln) in organisms which lack glutaminyl-tRNA synthetase. The reaction takes place in the presence of glutamine and ATP through an activated gamma-phospho-Glu-tRNA(Gln). The protein is Glutamyl-tRNA(Gln) amidotransferase subunit A of Lawsonia intracellularis (strain PHE/MN1-00).